Reading from the N-terminus, the 249-residue chain is Small ribosomal subunit protein eS6 (249 aa).

Residue K14 forms a Glycyl lysine isopeptide (Lys-Gly) (interchain with G-Cter in SUMO2) linkage. E35 is modified (ADP-ribosyl glutamic acid). (3R)-3-hydroxyarginine is present on R137. A Phosphoserine modification is found at S148. K211 bears the N6-acetyllysine mark. Residues 217 to 229 are compositionally biased toward basic and acidic residues; sequence MKEAKEKRQEQIA. The tract at residues 217 to 249 is disordered; sequence MKEAKEKRQEQIAKRRRLSSLRASTSKSESSQK. Phosphoserine; by RPS6KA1, RPS6KA3, DAPK1 and PASK occurs at positions 235 and 236. Residues 236 to 249 show a composition bias toward low complexity; it reads SLRASTSKSESSQK. 4 positions are modified to phosphoserine: S240, S242, S244, and S247.

The protein belongs to the eukaryotic ribosomal protein eS6 family. Component of the small ribosomal subunit. Part of the small subunit (SSU) processome, composed of more than 70 proteins and the RNA chaperone small nucleolar RNA (snoRNA) U3. Ribosomal protein S6 is the major substrate of protein kinases in eukaryote ribosomes. The phosphorylation is stimulated by growth factors, tumor promoting agents, and mitogens. It is dephosphorylated at growth arrest. Phosphorylated at Ser-235 and Ser-236 by RPS6KA1 and RPS6KA3; phosphorylation at these sites facilitates the assembly of the pre-initiation complex. In terms of processing, specifically hydroxylated (with R stereochemistry) at C-3 of Arg-137 by KDM8. Post-translationally, mono-ADP-ribosylation at Glu-35 by PARP16 inhibits polysome assembly and mRNA loading, thereby inhibiting protein translation.

The protein resides in the cytoplasm. The protein localises to the nucleus. It is found in the nucleolus. Its function is as follows. Component of the 40S small ribosomal subunit. Plays an important role in controlling cell growth and proliferation through the selective translation of particular classes of mRNA. Part of the small subunit (SSU) processome, first precursor of the small eukaryotic ribosomal subunit. During the assembly of the SSU processome in the nucleolus, many ribosome biogenesis factors, an RNA chaperone and ribosomal proteins associate with the nascent pre-rRNA and work in concert to generate RNA folding, modifications, rearrangements and cleavage as well as targeted degradation of pre-ribosomal RNA by the RNA exosome. The chain is Small ribosomal subunit protein eS6 (RPS6) from Bos taurus (Bovine).